We begin with the raw amino-acid sequence, 447 residues long: UPF0597 protein Amet_4665 (447 aa).

It belongs to the UPF0597 family.

The polypeptide is UPF0597 protein Amet_4665 (Alkaliphilus metalliredigens (strain QYMF)).